The following is an 872-amino-acid chain: DNA mismatch repair protein MutS (872 aa).

602-609 contacts ATP; that stretch reads GPNMSGKS.

The protein belongs to the DNA mismatch repair MutS family.

Its function is as follows. This protein is involved in the repair of mismatches in DNA. It is possible that it carries out the mismatch recognition step. This protein has a weak ATPase activity. This is DNA mismatch repair protein MutS from Staphylococcus aureus (strain bovine RF122 / ET3-1).